A 208-amino-acid chain; its full sequence is Peptidyl-tRNA hydrolase 2 (208 aa).

Positions 32–45 (SNASSTKKSSATLL) are enriched in low complexity. The disordered stretch occupies residues 32–81 (SNASSTKKSSATLLRSKEMKEGKLHNDTDEEESESEDESDEDEDIESTSL). The segment covering 46–58 (RSKEMKEGKLHND) has biased composition (basic and acidic residues). Acidic residues predominate over residues 59 to 77 (TDEEESESEDESDEDEDIE). A Glycyl lysine isopeptide (Lys-Gly) (interchain with G-Cter in ubiquitin) cross-link involves residue lysine 152.

It belongs to the PTH2 family.

It is found in the cytoplasm. It carries out the reaction an N-acyl-L-alpha-aminoacyl-tRNA + H2O = an N-acyl-L-amino acid + a tRNA + H(+). The natural substrate for this enzyme may be peptidyl-tRNAs which drop off the ribosome during protein synthesis. The chain is Peptidyl-tRNA hydrolase 2 from Saccharomyces cerevisiae (strain ATCC 204508 / S288c) (Baker's yeast).